A 290-amino-acid chain; its full sequence is 4-hydroxybenzoate octaprenyltransferase (290 aa).

Transmembrane regions (helical) follow at residues 20–40 (IGILLLLWPTLWGLWLAAEGV), 43–63 (LDILLIFVLGTVLMRSAGCVV), 92–112 (EALLLAAGLSLVAFLLIQPLN), 114–131 (LTIELSFVALFLAASYPF), 135–155 (FFAMPQAYLGIAFSFGIPMAF), 160–180 (GEVPFPAWFLMGANLLWVIAY), 209–229 (VVGVVLCHMAFLAGMVAIGLL), 231–251 (NLGVIYYIGLATALGLILYQY), and 266–286 (FLHNNWVGATIFAGIVLDYLV).

It belongs to the UbiA prenyltransferase family. The cofactor is Mg(2+).

The protein resides in the cell inner membrane. The enzyme catalyses all-trans-octaprenyl diphosphate + 4-hydroxybenzoate = 4-hydroxy-3-(all-trans-octaprenyl)benzoate + diphosphate. It participates in cofactor biosynthesis; ubiquinone biosynthesis. Its function is as follows. Catalyzes the prenylation of para-hydroxybenzoate (PHB) with an all-trans polyprenyl group. Mediates the second step in the final reaction sequence of ubiquinone-8 (UQ-8) biosynthesis, which is the condensation of the polyisoprenoid side chain with PHB, generating the first membrane-bound Q intermediate 3-octaprenyl-4-hydroxybenzoate. The chain is 4-hydroxybenzoate octaprenyltransferase from Nitrosospira multiformis (strain ATCC 25196 / NCIMB 11849 / C 71).